Reading from the N-terminus, the 86-residue chain is Kappa-theraphotoxin-Cg1a 6 (86 aa).

Residues 1-21 (MKVSVLITLAVLGVMFVWASA) form the signal peptide. Residues 22–50 (AELEERGSDQRDSPAWLKSMERIFQSEER) constitute a propeptide that is removed on maturation. 3 disulfide bridges follow: Cys52–Cys66, Cys59–Cys71, and Cys65–Cys78. Position 84 is a phenylalanine amide (Phe84).

This sequence belongs to the neurotoxin 10 (Hwtx-1) family. 28 (Jztx-11) subfamily. As to expression, expressed by the venom gland.

The protein localises to the secreted. Functionally, this toxin acts as a voltage-dependent gating-modifier. It inhibits the sodium conductance (IC(50)=124 nM) and slows the fast inactivation (EC(50)=1180 nM) of Nav1.5/SCN5A. It significantly shifts the activation to more depolarized voltages and decreases the deactivation of Nav1.5 currents upon extreme depolarization, but only slightly affects voltage-dependence of steady-state inactivation. In addition, this toxin causes an approximately five-fold decrease in the rate of recovery from inactivation and an approximately 1.9-fold reduction in the closed-state inactivation rate. This toxin integrates the functions of site 3 toxins (alpha-scorpion toxins) with site 4 toxins (beta-scorpion and spider toxins) by targeting multiple sites on Nav1.5. Also shows inhibition of voltage-gated potassium channels (5 uM completely inhibits Kv2.1/KCNB1, whereas 5 uM moderately inhibits Kv4.2/KCND2 Kv4.1/KCND1 channels). The sequence is that of Kappa-theraphotoxin-Cg1a 6 from Chilobrachys guangxiensis (Chinese earth tiger tarantula).